The primary structure comprises 528 residues: Peptide chain release factor 3 (528 aa).

Positions 11 to 279 (SDRRTFAIIS…GFVEWAPAPI (269 aa)) constitute a tr-type G domain. Residues 20–27 (SHPDAGKT), 88–92 (DTPGH), and 142–145 (NKMD) contribute to the GTP site.

This sequence belongs to the TRAFAC class translation factor GTPase superfamily. Classic translation factor GTPase family. PrfC subfamily.

The protein resides in the cytoplasm. Increases the formation of ribosomal termination complexes and stimulates activities of RF-1 and RF-2. It binds guanine nucleotides and has strong preference for UGA stop codons. It may interact directly with the ribosome. The stimulation of RF-1 and RF-2 is significantly reduced by GTP and GDP, but not by GMP. The chain is Peptide chain release factor 3 from Marinomonas sp. (strain MWYL1).